A 423-amino-acid chain; its full sequence is Serine/threonine-protein kinase ppk25 (423 aa).

2 positions are modified to phosphoserine: Ser36 and Ser38. The region spanning 53 to 305 (WIIKKTIGAG…LEQAAKFPWL (253 aa)) is the Protein kinase domain. ATP is bound by residues 59 to 67 (IGAGSMGKV) and Lys82. The Proton acceptor role is filled by Asp175.

The protein belongs to the protein kinase superfamily. Ser/Thr protein kinase family.

Its subcellular location is the cytoplasm. The catalysed reaction is L-seryl-[protein] + ATP = O-phospho-L-seryl-[protein] + ADP + H(+). The enzyme catalyses L-threonyl-[protein] + ATP = O-phospho-L-threonyl-[protein] + ADP + H(+). This is Serine/threonine-protein kinase ppk25 (ppk25) from Schizosaccharomyces pombe (strain 972 / ATCC 24843) (Fission yeast).